The following is a 161-amino-acid chain: Vitamin K-dependent protein C (161 aa).

The region spanning 1 to 161 (EKWELDLDIE…GCGLLHNYGV (161 aa)) is the Peptidase S1 domain. N-linked (GlcNAc...) asparagine glycosylation occurs at N17. The active-site Charge relay system is the D26. N-linked (GlcNAc...) asparagine glycosylation is present at N82. Disulfide bonds link C100/C114 and C125/C153. S129 acts as the Charge relay system in catalysis.

This sequence belongs to the peptidase S1 family. Plasma; synthesized in the liver.

The protein resides in the secreted. The protein localises to the golgi apparatus. It localises to the endoplasmic reticulum. It catalyses the reaction Degradation of blood coagulation factors Va and VIIIa.. Functionally, protein C is a vitamin K-dependent serine protease that regulates blood coagulation by inactivating factors Va and VIIIa in the presence of calcium ions and phospholipids. Exerts a protective effect on the endothelial cell barrier function. The chain is Vitamin K-dependent protein C (PROC) from Macaca mulatta (Rhesus macaque).